A 280-amino-acid chain; its full sequence is 1-cyclohexenylcarbonyl-CoA reductase (280 aa).

Residues 22-25, 71-72, and N98 each bind NADP(+); these read SRGI and DV. Residues Y158 and K165 each act as proton acceptor in the active site. NADP(+)-binding positions include K165 and 194 to 196; that span reads IDS.

The protein belongs to the short-chain dehydrogenases/reductases (SDR) family. In terms of assembly, homodimer.

The catalysed reaction is (4R,5R)-4,5-dihydroxycyclohex-2-ene-1-carbonyl-CoA + NADP(+) = (3R,4R)-3,4-dihydroxycyclohexa-1,5-diene-1-carbonyl-CoA + NADPH + H(+). The enzyme catalyses (3S)-3-hydroxycyclohexane-1-carbonyl-CoA + NADP(+) = (5S)-5-hydroxycyclohex-1-ene-1-carbonyl-CoA + NADPH + H(+). It catalyses the reaction cyclohexane-1-carbonyl-CoA + NADP(+) = cyclohex-1-ene-1-carbonyl-CoA + NADPH + H(+). It functions in the pathway antibiotic biosynthesis. Its activity is regulated as follows. Inhibited by the thiol inhibitors p-chloromercuribenzoate, N-ethylmaleimide and iodoacetamide. Also inhibited by various divalent cations. Functionally, involved in the biosynthesis of the antifungal antibiotic ansatrienin A (mycotrienin I). Catalyzes three of the reductive steps involved in the formation of the cyclohexanecarboxylic acid (CHC) moiety of ansatrienin from shikimic acid. Can use 3,4-dihydroxycyclohexa-1,5-diene-1-carbonyl-CoA, 5-hydroxycyclohex-1-ene-1-carbonyl-CoA and cyclohex-1-ene-1-carbonyl-CoA as substrates. The protein is 1-cyclohexenylcarbonyl-CoA reductase of Streptomyces collinus.